Consider the following 829-residue polypeptide: MKMTRRAFVKANAAASAAAVAGVTLPATATNLIASSDQTKITWDKAPCRFCGTGCSVLVGTQNGKVVATQGDPEAPVNKGLNCIKGYFLSKIMYGKDRLEQPLLRMKDGEFHKDGDFAPVSWDKAFDVMAEKWKAALKKNGPTGVGMFGSGQWTVMEGYAAVKLMKAGFRSNNIDPNARHCMASAVGAFMRTFGIDEPMGCYDDFEHADAFVLWGSNMAEMHPVLWTRITDRRLSHPHVKVNVLSTYYHRSFELADTGYIFEPQSDLAIANFIANYIIQNDAVNWEFVNKHTNFKQATTDIGYGLRDNDPLQKAAANPNSGKMTDISFEDYKASVAEYTVEKASEMSGVSQDDLIKLAKQYADPNIKVMSLWTMGMNQHTRGVWMNSLVYNIHLLTGKISTPGNSPFSLTGQPSACGTAREVGTFSHRLPADMVVANPKHRKIAEDIWKLPEGTIPPKPGKHAVAQDRALKDGTINAYWVMCNNNMQAGPNINTERLPGYRNPDNFIVCSDPYPTATAQASDLILPTAMWIEKEGAYGNAERRTQAWYQQVKTVGEAKSDLWQIMEFSKRFTVEEVWGEELLAKAPEYRGKTMYDVLYKNGNVDAFPLSEAQELNDDAQAQGFYVQKGLFEEYAAFGRDHGHDLAPYDTYHKVRGLRWPVVDGKETLWRFKEGSDPYAKKGSGWDFYGKPDGKALIINAPYEAPPEVPSDEYDMWLCTGRVLEHWHTGTMTRRVPELYKAVPDALCYIHPADAKARGLRRGDEVLIENKRGEVRVRVETRGRNRPPQGLVFVPFFDARILINKLILDATDPLSKQTDYKKCPVKITKVS.

Positions 1-29 (MKMTRRAFVKANAAASAAAVAGVTLPATA) form a signal peptide, tat-type signal. In terms of domain architecture, 4Fe-4S Mo/W bis-MGD-type spans 41 to 97 (ITWDKAPCRFCGTGCSVLVGTQNGKVVATQGDPEAPVNKGLNCIKGYFLSKIMYGKD). [4Fe-4S] cluster contacts are provided by C48, C51, C55, and C83. Mo-bis(molybdopterin guanine dinucleotide) contacts are provided by residues K85, Q152, N177, C181, 214-221 (WGSNMAEM), 245-249 (STYYH), 264-266 (QSD), M374, Q378, N484, 510-511 (SD), K533, D560, and 718-727 (TGRVLEHWHT). F794 serves as a coordination point for substrate. Residues N802 and K819 each coordinate Mo-bis(molybdopterin guanine dinucleotide).

It belongs to the prokaryotic molybdopterin-containing oxidoreductase family. NasA/NapA/NarB subfamily. In terms of assembly, component of the periplasmic nitrate reductase NapAB complex composed of NapA and NapB. It depends on [4Fe-4S] cluster as a cofactor. Mo-bis(molybdopterin guanine dinucleotide) is required as a cofactor. In terms of processing, predicted to be exported by the Tat system. The position of the signal peptide cleavage has not been experimentally proven.

It is found in the periplasm. The catalysed reaction is 2 Fe(II)-[cytochrome] + nitrate + 2 H(+) = 2 Fe(III)-[cytochrome] + nitrite + H2O. In terms of biological role, catalytic subunit of the periplasmic nitrate reductase complex NapAB. Receives electrons from NapB and catalyzes the reduction of nitrate to nitrite. The sequence is that of Periplasmic nitrate reductase from Vibrio atlanticus (strain LGP32) (Vibrio splendidus (strain Mel32)).